A 428-amino-acid chain; its full sequence is Cyclin-B1-1 (428 aa).

It belongs to the cyclin family. Cyclin AB subfamily. Interacts with FZR2/CCS52A1, FZR1/CCS52A2 and FZR3/CCS52B. As to expression, expressed in root tip, lateral root apex, shoot apex, leaf primordia, axillary buds, stamen and petal primordia, ovules and developing embryo.

It is found in the nucleus. This Arabidopsis thaliana (Mouse-ear cress) protein is Cyclin-B1-1 (CYCB1-1).